Consider the following 481-residue polypeptide: Palmitoyltransferase PFA4 (481 aa).

A disordered region spans residues 1-22 (MTNQDPDDGAYPSSQSDDDGIE). The Cytoplasmic portion of the chain corresponds to 1 to 66 (MTNQDPDDGA…APLTGRRRTP (66 aa)). Residues 67 to 87 (LSWTEVIWVSLTLLLIAVLGY) traverse the membrane as a helical segment. Residues 88 to 108 (SSQLYVMLPYYEKTPSFSPQA) are Lumenal-facing. A helical transmembrane segment spans residues 109–129 (LAAVLVPFNLGLLAIYYNYWL). Topologically, residues 130–223 (CVTTDAGSVP…LANCVGHFNH (94 aa)) are cytoplasmic. The 51-residue stretch at 181–231 (RYCKTCSAFKPPRSHHCKTCQRCVLRMDHHCPWLANCVGHFNHAHFIRFLF) folds into the DHHC domain. Residue Cys211 is the S-palmitoyl cysteine intermediate of the active site. A helical transmembrane segment spans residues 224–244 (AHFIRFLFYVDVTCLYHLIMI). Residues 245–265 (SCRVLDSFNSYTYWREPCARE) lie on the Lumenal side of the membrane. A helical membrane pass occupies residues 266 to 286 (LVWLVVNYALCIPVILLVGIF). Topologically, residues 287-481 (SLYHFYCLAV…EVRPHTPWSV (195 aa)) are cytoplasmic. Positions 370–481 (SQYRWPPKDP…EVRPHTPWSV (112 aa)) are disordered. Residues 418–431 (SSPSSSDSHSSLHL) show a composition bias toward low complexity. Basic and acidic residues-rich tracts occupy residues 441–452 (LPHHFDPPHDPD) and 466–475 (RGSEGYEVRP).

The protein belongs to the DHHC palmitoyltransferase family. PFA4 subfamily.

It localises to the endoplasmic reticulum membrane. It catalyses the reaction L-cysteinyl-[protein] + hexadecanoyl-CoA = S-hexadecanoyl-L-cysteinyl-[protein] + CoA. Mediates the reversible addition of palmitate to target proteins, thereby regulating their membrane association and biological function. The protein is Palmitoyltransferase PFA4 of Mycosarcoma maydis (Corn smut fungus).